The chain runs to 281 residues: 2-dehydro-3-deoxyphosphooctonate aldolase (281 aa).

It belongs to the KdsA family.

It localises to the cytoplasm. It carries out the reaction D-arabinose 5-phosphate + phosphoenolpyruvate + H2O = 3-deoxy-alpha-D-manno-2-octulosonate-8-phosphate + phosphate. It functions in the pathway carbohydrate biosynthesis; 3-deoxy-D-manno-octulosonate biosynthesis; 3-deoxy-D-manno-octulosonate from D-ribulose 5-phosphate: step 2/3. It participates in bacterial outer membrane biogenesis; lipopolysaccharide biosynthesis. In Pseudomonas syringae pv. tomato (strain ATCC BAA-871 / DC3000), this protein is 2-dehydro-3-deoxyphosphooctonate aldolase.